The sequence spans 347 residues: Selenide, water dikinase (347 aa).

C17 is an active-site residue. Residues K20 and 48-50 (TRD) each bind ATP. Residue D51 participates in Mg(2+) binding. Residues D68, D91, and 139 to 141 (GHS) each bind ATP. Residue D91 participates in Mg(2+) binding. Position 227 (D227) interacts with Mg(2+).

It belongs to the selenophosphate synthase 1 family. Class I subfamily. In terms of assembly, homodimer. Mg(2+) is required as a cofactor.

It catalyses the reaction hydrogenselenide + ATP + H2O = selenophosphate + AMP + phosphate + 2 H(+). In terms of biological role, synthesizes selenophosphate from selenide and ATP. The protein is Selenide, water dikinase of Escherichia coli O139:H28 (strain E24377A / ETEC).